We begin with the raw amino-acid sequence, 293 residues long: uncharacterized protein (293 aa).

Belongs to the TolB family.

This is an uncharacterized protein from Agrobacterium fabrum (strain C58 / ATCC 33970) (Agrobacterium tumefaciens (strain C58)).